A 390-amino-acid chain; its full sequence is GTP 3',8-cyclase, mitochondrial (390 aa).

Residues M1–F45 constitute a mitochondrion transit peptide. A Radical SAM core domain is found at K69–P290. GTP is bound at residue R78. C85 and C89 together coordinate [4Fe-4S] cluster. Y91 lines the S-adenosyl-L-methionine pocket. C92 serves as a coordination point for [4Fe-4S] cluster. R128 contributes to the GTP binding site. G132 serves as a coordination point for S-adenosyl-L-methionine. T159 provides a ligand contact to GTP. Residue S183 coordinates S-adenosyl-L-methionine. K220 is a GTP binding site. M254 contributes to the S-adenosyl-L-methionine binding site. 2 residues coordinate [4Fe-4S] cluster: C317 and C320. Position 322 to 324 (R322 to R324) interacts with GTP. C334 provides a ligand contact to [4Fe-4S] cluster.

Belongs to the radical SAM superfamily. MoaA family. As to quaternary structure, homodimer. The cofactor is [4Fe-4S] cluster. As to expression, expressed in all organs, with an abundant expression in the roots.

It localises to the mitochondrion matrix. It catalyses the reaction GTP + AH2 + S-adenosyl-L-methionine = (8S)-3',8-cyclo-7,8-dihydroguanosine 5'-triphosphate + 5'-deoxyadenosine + L-methionine + A + H(+). Its pathway is cofactor biosynthesis; molybdopterin biosynthesis. Functionally, catalyzes the cyclization of GTP to (8S)-3',8-cyclo-7,8-dihydroguanosine 5'-triphosphate. The chain is GTP 3',8-cyclase, mitochondrial (CNX2) from Arabidopsis thaliana (Mouse-ear cress).